Here is a 157-residue protein sequence, read N- to C-terminus: Putative pre-16S rRNA nuclease (157 aa).

Belongs to the YqgF nuclease family.

The protein localises to the cytoplasm. In terms of biological role, could be a nuclease involved in processing of the 5'-end of pre-16S rRNA. This is Putative pre-16S rRNA nuclease from Orientia tsutsugamushi (strain Ikeda) (Rickettsia tsutsugamushi).